The following is a 483-amino-acid chain: M protein, serotype 6 (483 aa).

Residues 1–42 (MAKNNTNRHYSLRKLKKGTASVAVALSVIGAGLVVNTNEVSA) form the signal peptide. Residues 54–171 (DKARELLNKY…IGTLKKTLDE (118 aa)) are a coiled coil. Repeat copies occupy residues 69–75 (MLQANND), 76–82 (KLTTENN), 83–89 (NLTDQNK), 90–96 (NLTTENK), 97–103 (NLTDQNK), 104–110 (NLTTENK), 111–117 (NLTDQNK), and 118–124 (NLTTENK). A 10 X 7 AA approximate tandem repeats of [KMNR]-L-[TQ]-[TDA]-[ENQ]-N-[NDK] region spans residues 69 to 138 (MLQANNDKLT…EENRLTTENK (70 aa)). Polar residues predominate over residues 74-87 (NDKLTTENNNLTDQ). The tract at residues 74–157 (NDKLTTENNN…EEEAANKERE (84 aa)) is disordered. Residues 88–113 (NKNLTTENKNLTDQNKNLTTENKNLT) are compositionally biased toward low complexity. Basic and acidic residues-rich tracts occupy residues 122–135 (ENKELKAEENRLTT) and 143–157 (KLSEAEEEAANKERE). The stretch at 125-131 (ELKAEEN) is one 9-1; approximate repeat. 5 repeat units span residues 132–138 (RLTTENK), 157–181 (ENKEAIGTLKKTLDETVKDKIAKEQ), 182–206 (ESKETIGTLKKTLDETVKDKIAKEQ), 207–231 (ESKETIGTLKKTLDETVKDKIAKEQ), and 232–256 (ESKETIGTLKKILDETVKDKIAREQ). A 4.5 X 25 AA tandem repeats of E-[NS]-K-E-[TA]-I-G-T-L-K-K-[TI]-L-D-E-T-V-K-D-K-I-A-[KR]-E-Q region spans residues 157-269 (ENKEAIGTLK…QDIGALKQEL (113 aa)). 2 disordered regions span residues 255-298 (EQKS…EAKK) and 314-345 (VKEEKQISDASRQGLRRDLDASREAKKQVEKA). One copy of the 5-2; truncated repeat lies at 257–269 (KSKQDIGALKQEL). Basic and acidic residues-rich tracts occupy residues 268–298 (ELAKKDEGNKVSEASRKGLRRDLDASREAKK) and 328–345 (LRRDLDASREAKKQVEKA). C repeat units lie at residues 270-304 (AKKDEGNKVSEASRKGLRRDLDASREAKKQVEKDL) and 312-346 (DKVKEEKQISDASRQGLRRDLDASREAKKQVEKAL). Residues 279-347 (SEASRKGLRR…AKKQVEKALE (69 aa)) are binding to CD46. The segment at 279-347 (SEASRKGLRR…AKKQVEKALE (69 aa)) is two directly repeated 27 amino acid blocks separated by 15 amino acids. The stretch at 280 to 408 (EASRKGLRRD…LAKLRAGKAS (129 aa)) forms a coiled coil. Residues 348-411 (EANSKLAALE…LRAGKASDSQ (64 aa)) are hydrophilic. D repeat units lie at residues 379–384 (AKLEAE), 385–390 (AKALKE), 393–398 (AKQAEE), and 400–405 (AKLRAG). The tract at residues 400–455 (AKLRAGKASDSQTPDAKPGNKVVPGKGQAPQAGTKPNQNKAPMKETKRQLPSTGET) is disordered. Residues 449–453 (LPSTG) carry the LPXTG sorting signal motif. T452 is subject to Pentaglycyl murein peptidoglycan amidated threonine. Positions 453-483 (GETANPFFTAAALTVMATAGVAAVVKRKEEN) are cleaved as a propeptide — removed by sortase.

The protein belongs to the M protein family.

The protein resides in the secreted. It is found in the cell wall. In terms of biological role, mediates the attachment of S.pyogenes to skin epithelial cells through the binding of the human membrane cofactor protein CD46. Also binds to the factor H and factor H-like protein 1. These interactions could contribute to the fact that the M6 protein protects the bacterium from the phagocytosis by regulating the complement activation on the bacterial surface. This Streptococcus pyogenes protein is M protein, serotype 6 (emm6).